The primary structure comprises 369 residues: Tetraacyldisaccharide 4'-kinase (369 aa).

68 to 75 (VVGGTGKT) contacts ATP.

Belongs to the LpxK family.

It carries out the reaction a lipid A disaccharide + ATP = a lipid IVA + ADP + H(+). Its pathway is glycolipid biosynthesis; lipid IV(A) biosynthesis; lipid IV(A) from (3R)-3-hydroxytetradecanoyl-[acyl-carrier-protein] and UDP-N-acetyl-alpha-D-glucosamine: step 6/6. Its function is as follows. Transfers the gamma-phosphate of ATP to the 4'-position of a tetraacyldisaccharide 1-phosphate intermediate (termed DS-1-P) to form tetraacyldisaccharide 1,4'-bis-phosphate (lipid IVA). The polypeptide is Tetraacyldisaccharide 4'-kinase (Chlamydia trachomatis serovar D (strain ATCC VR-885 / DSM 19411 / UW-3/Cx)).